The primary structure comprises 139 residues: MKKGTVLNSEISSVISRLGHTDTLVVCDAGLPIPNSTARIDMALTQGVPSFMQVVDVVTWEMQVEAAILATEIKQQNPQLHETLLTHLEQLQQHQGNTIKISYTTHEQFKKLTADSQAVIRSGECSPYANVIICAGVTF.

Catalysis depends on H20, which acts as the Proton donor. Substrate contacts are provided by residues D28, H106, and 128–130; that span reads YAN.

Belongs to the RbsD / FucU family. RbsD subfamily. As to quaternary structure, homodecamer.

It localises to the cytoplasm. The catalysed reaction is beta-D-ribopyranose = beta-D-ribofuranose. The protein operates within carbohydrate metabolism; D-ribose degradation; D-ribose 5-phosphate from beta-D-ribopyranose: step 1/2. Catalyzes the interconversion of beta-pyran and beta-furan forms of D-ribose. This is D-ribose pyranase from Salmonella typhi.